Reading from the N-terminus, the 231-residue chain is Ribonuclease P protein component 3 (231 aa).

Belongs to the eukaryotic/archaeal RNase P protein component 3 family. Consists of a catalytic RNA component and at least 4-5 protein subunits.

The protein localises to the cytoplasm. It carries out the reaction Endonucleolytic cleavage of RNA, removing 5'-extranucleotides from tRNA precursor.. Functionally, part of ribonuclease P, a protein complex that generates mature tRNA molecules by cleaving their 5'-ends. This Methanococcus maripaludis (strain C5 / ATCC BAA-1333) protein is Ribonuclease P protein component 3.